The following is a 352-amino-acid chain: MTQIKLSTLQTLLPDATFQNSETLKDINFSGLTSLTLAGPSDISFVASKTFVNEAKASKASLLVVSQETAEALSDKAIIIVSKVELTTAKIIRLFFPEKQPSGKRSAQVAIDPSAKIGSNTDIGHFVTIGKDSIIGNDCIIEDGVKIGDRVQIGDGARIGKNCVFFDDTIVGKRFIAFGNSTFGGDGFGFVYAEGKHNKIPQVGRVVIGDDVEVGSNCTIDRGALTDTTIGNGCKFDNMVHVAHNCKVGDHVIIAGQSGLAGSVTLGNNVIIGGACAISDHLTLVDGTIIAGGSSLRTSPKTKDVYVGWDLGLTFPEFQKYRVNIKNIVNLNKWLKRIENIEKKVGIETKES.

Catalysis depends on H244, which acts as the Proton acceptor.

This sequence belongs to the transferase hexapeptide repeat family. LpxD subfamily. Homotrimer.

The enzyme catalyses a UDP-3-O-[(3R)-3-hydroxyacyl]-alpha-D-glucosamine + a (3R)-hydroxyacyl-[ACP] = a UDP-2-N,3-O-bis[(3R)-3-hydroxyacyl]-alpha-D-glucosamine + holo-[ACP] + H(+). It participates in bacterial outer membrane biogenesis; LPS lipid A biosynthesis. In terms of biological role, catalyzes the N-acylation of UDP-3-O-acylglucosamine using 3-hydroxyacyl-ACP as the acyl donor. Is involved in the biosynthesis of lipid A, a phosphorylated glycolipid that anchors the lipopolysaccharide to the outer membrane of the cell. The chain is UDP-3-O-acylglucosamine N-acyltransferase from Leptospira biflexa serovar Patoc (strain Patoc 1 / Ames).